The chain runs to 1072 residues: DNA-directed RNA polymerase subunit beta (1072 aa).

The protein belongs to the RNA polymerase beta chain family. As to quaternary structure, in plastids the minimal PEP RNA polymerase catalytic core is composed of four subunits: alpha, beta, beta', and beta''. When a (nuclear-encoded) sigma factor is associated with the core the holoenzyme is formed, which can initiate transcription.

It localises to the plastid. Its subcellular location is the chloroplast. It catalyses the reaction RNA(n) + a ribonucleoside 5'-triphosphate = RNA(n+1) + diphosphate. DNA-dependent RNA polymerase catalyzes the transcription of DNA into RNA using the four ribonucleoside triphosphates as substrates. This chain is DNA-directed RNA polymerase subunit beta, found in Draba nemorosa (Woodland whitlowgrass).